We begin with the raw amino-acid sequence, 145 residues long: Cystatin-F (145 aa).

The N-terminal stretch at 1 to 19 (MRAAGTLLAFCCLVLSTTG) is a signal peptide. A glycan (N-linked (GlcNAc...) asparagine) is linked at Asn-62. Positions 81–85 (QIVKG) match the Secondary area of contact motif. Cys-99 and Cys-110 form a disulfide bridge. A glycan (N-linked (GlcNAc...) asparagine) is linked at Asn-115. The cysteines at positions 124 and 144 are disulfide-linked.

It belongs to the cystatin family. Homodimer; disulfide-linked. In terms of tissue distribution, primarily expressed in peripheral blood cells and spleen.

The protein localises to the secreted. It is found in the cytoplasm. Inhibits papain and cathepsin L but with affinities lower than other cystatins. May play a role in immune regulation through inhibition of a unique target in the hematopoietic system. The chain is Cystatin-F (CST7) from Homo sapiens (Human).